Consider the following 150-residue polypeptide: Aspartate 1-decarboxylase 2 (150 aa).

The active-site Schiff-base intermediate with substrate; via pyruvic acid is the S24. The residue at position 24 (S24) is a Pyruvic acid (Ser). T56 contacts substrate. Y57 functions as the Proton donor in the catalytic mechanism. 72-74 provides a ligand contact to substrate; it reads GAA.

This sequence belongs to the PanD family. As to quaternary structure, heterooctamer of four alpha and four beta subunits. It depends on pyruvate as a cofactor. Is synthesized initially as an inactive proenzyme, which is activated by self-cleavage at a specific serine bond to produce a beta-subunit with a hydroxyl group at its C-terminus and an alpha-subunit with a pyruvoyl group at its N-terminus.

Its subcellular location is the cytoplasm. It catalyses the reaction L-aspartate + H(+) = beta-alanine + CO2. The protein operates within cofactor biosynthesis; (R)-pantothenate biosynthesis; beta-alanine from L-aspartate: step 1/1. Functionally, catalyzes the pyruvoyl-dependent decarboxylation of aspartate to produce beta-alanine. The polypeptide is Aspartate 1-decarboxylase 2 (Mesorhizobium japonicum (strain LMG 29417 / CECT 9101 / MAFF 303099) (Mesorhizobium loti (strain MAFF 303099))).